The primary structure comprises 348 residues: Bombesin receptor-activated protein C6orf89 homolog (348 aa).

Topologically, residues 1 to 58 (MDLAANEISIYDKLSETVDLVRQTGHQCGMSEKAIEKFIRQLLEKNEPQRGPPQYPLL) are cytoplasmic. The chain crosses the membrane as a helical span at residues 59-79 (IAVYKVLLTLGLILFTAYFVI). At 80-348 (QPFSSLAPEP…ICDGTTLSDL (269 aa)) the chain is on the extracellular side.

As to quaternary structure, homodimer. Interacts with BRS3. Interacts (via N-terminus) with SIN3B. Post-translationally, glycosylated.

The protein localises to the golgi apparatus membrane. Its subcellular location is the cytoplasm. Exhibits histone deacetylase (HDAC) enhancer properties. May play a role in cell cycle progression and wound repair of bronchial epithelial cells. The sequence is that of Bombesin receptor-activated protein C6orf89 homolog from Mus musculus (Mouse).